The sequence spans 230 residues: MSRCLALVPAAGGGSRMGADRPKQYLDLAGAPLLAHTLRRLLAEPRLARVLVVLAPDDVWFDRFDWPRDVRLEILRVGGATRAESVRNGLLHAGAAADDWVLVHDAARCCLPPDALDRLIDTLQADPVGGLLALPVADTLKRETSGQRVAQTVSREGLWLAQTPQMFRAGMLALALDRPLDRAVTDEASAIERLGLVPRLVTGDALNFKVTWPHDLVLARAVLGLDNAGK.

The protein belongs to the IspD/TarI cytidylyltransferase family. IspD subfamily.

It catalyses the reaction 2-C-methyl-D-erythritol 4-phosphate + CTP + H(+) = 4-CDP-2-C-methyl-D-erythritol + diphosphate. It functions in the pathway isoprenoid biosynthesis; isopentenyl diphosphate biosynthesis via DXP pathway; isopentenyl diphosphate from 1-deoxy-D-xylulose 5-phosphate: step 2/6. Functionally, catalyzes the formation of 4-diphosphocytidyl-2-C-methyl-D-erythritol from CTP and 2-C-methyl-D-erythritol 4-phosphate (MEP). This chain is 2-C-methyl-D-erythritol 4-phosphate cytidylyltransferase, found in Laribacter hongkongensis (strain HLHK9).